The sequence spans 272 residues: Tumor necrosis factor receptor superfamily member 4 (272 aa).

Positions 1–19 (MYVWVQQPTALLLLALTLG) are cleaved as a signal peptide. The Extracellular segment spans residues 20 to 211 (VTARRLNCVK…PPTLVTPEGP (192 aa)). 2 TNFR-Cys repeats span residues 26 to 61 (NCVKHTYPSGHKCCRECQPGHGMVSRCDHTRDTLCH) and 62 to 103 (PCET…DTVC). 8 disulfides stabilise this stretch: Cys-27–Cys-38, Cys-39–Cys-52, Cys-42–Cys-60, Cys-63–Cys-77, Cys-80–Cys-95, Cys-83–Cys-103, Cys-105–Cys-123, and Cys-126–Cys-139. The TNFR-Cys 3; truncated repeat unit spans residues 104–124 (RCRPGTQPRQDSGYKLGVDCV). Residues 125–165 (PCPPGHFSPGNNQACKPWTNCTLSGKQTRHPASDSLDAVCE) form a TNFR-Cys 4 repeat. A glycan (N-linked (GlcNAc...) asparagine) is linked at Asn-144. Cys-145 and Cys-164 are disulfide-bonded. Residues 212 to 236 (AFAVLLGLGLGLLAPLTVLLALYLL) traverse the membrane as a helical segment. The Cytoplasmic portion of the chain corresponds to 237–272 (RKAWRLPNTPKPCWGNSFRTPIQEEHTDAHFTLAKI).

In terms of assembly, interacts with TRAF2, TRAF3 and TRAF5. Expressed in CD4(+) T-cells and in T-helper Th17 cells (at protein level).

Its subcellular location is the membrane. Its function is as follows. Receptor for TNFSF4/OX40L/GP34. Is a costimulatory molecule implicated in long-term T-cell immunity. In Mus musculus (Mouse), this protein is Tumor necrosis factor receptor superfamily member 4 (Tnfrsf4).